A 964-amino-acid polypeptide reads, in one-letter code: Isoleucine--tRNA ligase (964 aa).

Positions P66–H76 match the 'HIGH' region motif. E596 lines the L-isoleucyl-5'-AMP pocket. The 'KMSKS' region motif lies at K637–S641. K640 contributes to the ATP binding site. Zn(2+) is bound by residues C927, C930, C947, and C950.

Belongs to the class-I aminoacyl-tRNA synthetase family. IleS type 1 subfamily. In terms of assembly, monomer. Requires Zn(2+) as cofactor.

It is found in the cytoplasm. It carries out the reaction tRNA(Ile) + L-isoleucine + ATP = L-isoleucyl-tRNA(Ile) + AMP + diphosphate. Functionally, catalyzes the attachment of isoleucine to tRNA(Ile). As IleRS can inadvertently accommodate and process structurally similar amino acids such as valine, to avoid such errors it has two additional distinct tRNA(Ile)-dependent editing activities. One activity is designated as 'pretransfer' editing and involves the hydrolysis of activated Val-AMP. The other activity is designated 'posttransfer' editing and involves deacylation of mischarged Val-tRNA(Ile). The chain is Isoleucine--tRNA ligase from Cupriavidus necator (strain ATCC 17699 / DSM 428 / KCTC 22496 / NCIMB 10442 / H16 / Stanier 337) (Ralstonia eutropha).